A 298-amino-acid polypeptide reads, in one-letter code: Protease HtpX homolog (298 aa).

The next 2 helical transmembrane spans lie at 5 to 25 (IFLF…VLSV) and 45 to 65 (MALL…SLAI). Residue His155 participates in Zn(2+) binding. Glu156 is a catalytic residue. Residue His159 coordinates Zn(2+). 2 helical membrane-spanning segments follow: residues 170 to 190 (LLQG…AWIA) and 204 to 224 (FIAM…VVFA). Glu230 contributes to the Zn(2+) binding site.

The protein belongs to the peptidase M48B family. The cofactor is Zn(2+).

The protein localises to the cell membrane. This is Protease HtpX homolog from Bacillus subtilis (strain 168).